Consider the following 201-residue polypeptide: Ribonuclease MRP protein subunit RMP1 (201 aa).

Residues 86 to 108 (YWQFNGVIALGQFVTLGCTLVTL) form a helical membrane-spanning segment.

Component of RNase MRP complex which consists of an RNA moiety and at least 10 protein subunits including POP1, POP3, POP4, POP5, POP6, POP7, POP8, RMP1, RPP1 and SNM1, many of which are shared with the RNase P complex.

It localises to the membrane. Its subcellular location is the cytoplasm. It is found in the nucleus. Its function is as follows. Functions as part of ribonuclease MRP (RNase MRP), which is involved in rRNA processing in mitochondria. This chain is Ribonuclease MRP protein subunit RMP1, found in Saccharomyces cerevisiae (strain ATCC 204508 / S288c) (Baker's yeast).